The sequence spans 78 residues: Transmembrane protein 258 (78 aa).

The Cytoplasmic segment spans residues 1 to 18 (MDVMQRYVSPVNPAVFPH). The helical transmembrane segment at 19 to 39 (LATVLLVIGTFFTAWFFIFVV) threads the bilayer. Residues 40-53 (SRKSSKESTLIKEL) are Cytoplasmic-facing. The chain crosses the membrane as a helical span at residues 54–74 (LISLCASIFLGFGIVFLLLTV). Residues 75 to 78 (GIYV) lie on the Perinuclear space side of the membrane.

The protein belongs to the OST5 family. Homodimer. Component of the oligosaccharyltransferase (OST) complex. Interacts with klar and Msp300, components of LINC complex.

The protein localises to the nucleus outer membrane. Its subcellular location is the cytoplasm. It is found in the endoplasmic reticulum membrane. Functionally, subunit of the oligosaccharyl transferase (OST) complex that catalyzes the initial transfer of a defined glycan (Glc(3)Man(9)GlcNAc(2) in eukaryotes) from the lipid carrier dolichol-pyrophosphate to an asparagine residue within an Asn-X-Ser/Thr consensus motif in nascent polypeptide chains, the first step in protein N-glycosylation. N-glycosylation occurs cotranslationally and the complex associates with the Sec61 complex at the channel-forming translocon complex that mediates protein translocation across the endoplasmic reticulum (ER). All subunits are required for a maximal enzyme activity. In addition may regulates nuclear envelope (NE) architecture and nuclear positioning through the linker of nucleoskeleton and cytoskeleton (LINC)-dependent and -independent mechanisms. This Drosophila melanogaster (Fruit fly) protein is Transmembrane protein 258.